A 103-amino-acid polypeptide reads, in one-letter code: UPF0145 protein PTH_2690 (103 aa).

This sequence belongs to the UPF0145 family.

The polypeptide is UPF0145 protein PTH_2690 (Pelotomaculum thermopropionicum (strain DSM 13744 / JCM 10971 / SI)).